Reading from the N-terminus, the 186-residue chain is Serine hydrolase RBBP9 (186 aa).

Residues 63-67 (LHCDE) form an involved in binding to RB1 region. Catalysis depends on charge relay system residues Ser-75, Asp-138, and His-165.

It belongs to the RBBP9 family. Interacts with RB1; the interaction disrupts RB1 binding to E2F1. Interacts with RBL1 and RBL2. As to expression, expressed at higher levels in tumor tissues such as carcinoma.

It catalyses the reaction valacyclovir + H2O = acyclovir + L-valine + H(+). Its activity is regulated as follows. Inhibited by the natural product emetine produced by the ipecac root. Serine hydrolase. Catalyzes the hydrolytic activation of amino acid ester of the antiviral prodrug valacyclovir to its corresponding active drug, acyclovir. May negatively regulate basal or autocrine TGF-beta signaling by suppressing SMAD2-SMAD3 phosphorylation. May play a role in the transformation process due to its capacity to confer resistance to the growth-inhibitory effects of TGF-beta through interaction with RB1 and the subsequent displacement of E2F1. In Homo sapiens (Human), this protein is Serine hydrolase RBBP9.